The following is a 405-amino-acid chain: Patatin-like protein 2 (405 aa).

Positions 24–230 constitute a PNPLA domain; it reads LSIDGGGVRG…AANNPTLCAM (207 aa). Residues 28–33 carry the GXGXXG motif; it reads GGGVRG. The GXSXG signature appears at 66 to 70; it reads GTSTG. Catalysis depends on Ser68, which acts as the Nucleophile. The active-site Proton acceptor is Asp217. The DGA/G signature appears at 217–219; the sequence is DGG.

It belongs to the patatin family.

Its function is as follows. Possesses non-specific lipolytic acyl hydrolase (LAH) activity. Hydrolyzes phospholipids as well as galactolipids. May play a role in disease resistance. The chain is Patatin-like protein 2 (PLP2) from Oryza sativa subsp. indica (Rice).